A 303-amino-acid chain; its full sequence is N-acetyl-D-glucosamine kinase (303 aa).

ATP-binding positions include 4–11 (GFDIGGTK) and 133–140 (GVGGGLVL). Zn(2+) is bound by residues histidine 157, cysteine 177, cysteine 179, and cysteine 184.

This sequence belongs to the ROK (NagC/XylR) family. NagK subfamily.

The catalysed reaction is N-acetyl-D-glucosamine + ATP = N-acetyl-D-glucosamine 6-phosphate + ADP + H(+). Its pathway is cell wall biogenesis; peptidoglycan recycling. Its function is as follows. Catalyzes the phosphorylation of N-acetyl-D-glucosamine (GlcNAc) derived from cell-wall degradation, yielding GlcNAc-6-P. The sequence is that of N-acetyl-D-glucosamine kinase from Salmonella gallinarum (strain 287/91 / NCTC 13346).